Here is a 331-residue protein sequence, read N- to C-terminus: Type 2 lactosamine alpha-2,3-sialyltransferase (331 aa).

Over methionine 1–tyrosine 4 the chain is Cytoplasmic. A helical; Signal-anchor for type II membrane protein transmembrane segment spans residues valine 5–glycine 25. Residues threonine 26–asparagine 331 lie on the Lumenal side of the membrane. Residues asparagine 129, asparagine 181, asparagine 295, asparagine 308, and asparagine 327 are each glycosylated (N-linked (GlcNAc...) asparagine).

The protein belongs to the glycosyltransferase 29 family.

The protein localises to the golgi apparatus membrane. It carries out the reaction a neolactoside nLc4Cer(d18:1(4E)) + CMP-N-acetyl-beta-neuraminate = a neolactoside IV(3)-alpha-NeuAc-nLc4Cer(d18:1(4E)) + CMP + H(+). It catalyses the reaction a beta-D-galactosyl-(1-&gt;4)-N-acetyl-beta-D-glucosaminyl derivative + CMP-N-acetyl-beta-neuraminate = an N-acetyl-alpha-neuraminyl-(2-&gt;3)-beta-D-galactosyl-(1-&gt;4)-N-acetyl-beta-D-glucosaminyl derivative + CMP + H(+). The enzyme catalyses a neolactoside nLc6Cer(d18:1(4E)) + CMP-N-acetyl-beta-neuraminate = a neolactoside VI(3)-alpha-NeuNAc-nLc6Cer(d18:1(4E)) + CMP + H(+). Its function is as follows. Transfers the sialyl residue from CMP-N-acetyl-beta-neuraminate to the terminal galactose residue on sugar chains of glycoproteins and glycolipids. It's alpha-2,3-sialyltransferase activity is specific toward type II glycan chains (Galbeta1-4GlcNAc) on glycoproteins and glycolipids such as neolactosides nLc4Cer and nLc6Cer, whose sialyl-products serve as precursors for the Lewis X antigen. Critically involved in the synthesis of functional selectin ligands needed for neutrophil recruitment during inflammation and lymphocyte homing to the lymph nodes. In Rattus norvegicus (Rat), this protein is Type 2 lactosamine alpha-2,3-sialyltransferase (St3gal6).